Here is a 157-residue protein sequence, read N- to C-terminus: Protein Smg homolog (157 aa).

It belongs to the Smg family.

This is Protein Smg homolog from Tolumonas auensis (strain DSM 9187 / NBRC 110442 / TA 4).